A 69-amino-acid chain; its full sequence is Putative membrane protein insertion efficiency factor (69 aa).

It belongs to the UPF0161 family.

It is found in the cell inner membrane. In terms of biological role, could be involved in insertion of integral membrane proteins into the membrane. The sequence is that of Putative membrane protein insertion efficiency factor from Geobacter metallireducens (strain ATCC 53774 / DSM 7210 / GS-15).